A 62-amino-acid polypeptide reads, in one-letter code: Large ribosomal subunit protein uL30 (62 aa).

It belongs to the universal ribosomal protein uL30 family. As to quaternary structure, part of the 50S ribosomal subunit.

The polypeptide is Large ribosomal subunit protein uL30 (Alkalilimnicola ehrlichii (strain ATCC BAA-1101 / DSM 17681 / MLHE-1)).